Here is a 212-residue protein sequence, read N- to C-terminus: Imidazole glycerol phosphate synthase subunit HisH (212 aa).

The 211-residue stretch at 1 to 211 (MIGVIDYGMG…TKMAAEQQVK (211 aa)) folds into the Glutamine amidotransferase type-1 domain. Residue Cys-79 is the Nucleophile of the active site. Catalysis depends on residues His-186 and Glu-188.

Heterodimer of HisH and HisF.

It is found in the cytoplasm. It carries out the reaction 5-[(5-phospho-1-deoxy-D-ribulos-1-ylimino)methylamino]-1-(5-phospho-beta-D-ribosyl)imidazole-4-carboxamide + L-glutamine = D-erythro-1-(imidazol-4-yl)glycerol 3-phosphate + 5-amino-1-(5-phospho-beta-D-ribosyl)imidazole-4-carboxamide + L-glutamate + H(+). The catalysed reaction is L-glutamine + H2O = L-glutamate + NH4(+). It participates in amino-acid biosynthesis; L-histidine biosynthesis; L-histidine from 5-phospho-alpha-D-ribose 1-diphosphate: step 5/9. IGPS catalyzes the conversion of PRFAR and glutamine to IGP, AICAR and glutamate. The HisH subunit catalyzes the hydrolysis of glutamine to glutamate and ammonia as part of the synthesis of IGP and AICAR. The resulting ammonia molecule is channeled to the active site of HisF. In Bacillus velezensis (strain DSM 23117 / BGSC 10A6 / LMG 26770 / FZB42) (Bacillus amyloliquefaciens subsp. plantarum), this protein is Imidazole glycerol phosphate synthase subunit HisH.